Consider the following 272-residue polypeptide: Indole-3-glycerol phosphate synthase (272 aa).

It belongs to the TrpC family.

The enzyme catalyses 1-(2-carboxyphenylamino)-1-deoxy-D-ribulose 5-phosphate + H(+) = (1S,2R)-1-C-(indol-3-yl)glycerol 3-phosphate + CO2 + H2O. It participates in amino-acid biosynthesis; L-tryptophan biosynthesis; L-tryptophan from chorismate: step 4/5. This is Indole-3-glycerol phosphate synthase from Paenarthrobacter aurescens (strain TC1).